The sequence spans 782 residues: Transcription factor SOX-30 (782 aa).

Disordered regions lie at residues 1 to 37 (MERA…AQPV), 95 to 117 (LPPG…AAAA), and 139 to 226 (PPQS…DALK). Pro residues-rich tracts occupy residues 7-35 (EPPP…PPAQ) and 97-106 (PGGPGVPPAP). Basic and acidic residues predominate over residues 203 to 226 (LDGRRSDEKKAKLEAEEAPRDALK). The segment at residues 366–434 (VKRPMNAFMV…KHREEFPGWV (69 aa)) is a DNA-binding region (HMG box). Disordered regions lie at residues 501-604 (PTPA…STCP), 704-724 (YPDE…DGPP), and 756-782 (ASAP…LRNL). The span at 512-522 (TLFQPSVSSTG) shows a compositional bias: polar residues. Residues 525 to 538 (AVPPPSLTPRPSLP) are compositionally biased toward pro residues. Over residues 555–574 (SGSSRSVKRSTPGSLESTTR) the composition is skewed to polar residues. A compositionally biased stretch (basic and acidic residues) spans 704–718 (YPDEHTHSEDSRSCE).

In terms of assembly, interacts with CTNNB1, competitively inhibiting CTNNB1-TCF7L2/TCF4 interaction. In terms of tissue distribution, expressed in the lung (at protein level). Expressed in testes (at protein level). Expressed in preleptotene spermatocytes, round spermatids, and elongated spermatids in the testis (at protein level). Expressed in pachytene spermatocytes during stages 3 to 8 of spermatogenesis (at protein level). Increased expression in diplotene spermatocytes at stage 9-11 and in metaphase spermatocytes or secondary spermatocytes at stage 12. Expressed in ovaries.

It localises to the nucleus. The protein localises to the cytoplasm. Acts both as a transcriptional activator and a repressor. Binds to the DNA sequence 5'-ACAAT-3' and shows a preference for guanine residues surrounding this core motif. Binds to its own promoter and activates its own transcription. Required to activate the expression of postmeiotic genes involved in spermiogenesis. Binds to the promoter region of CTNNB1 and represses its transcription which leads to inhibition of Wnt signaling. Also inhibits Wnt signaling by binding to the CTNNB1 protein, preventing interaction of CTNNB1 with TCF7L2/TCF4. This chain is Transcription factor SOX-30 (Sox30), found in Mus musculus (Mouse).